Here is a 375-residue protein sequence, read N- to C-terminus: Dehydrodolichyl diphosphate synthase complex subunit NUS1 (375 aa).

Basic and acidic residues predominate over residues 1-28 (MPTMIKKDDKAMEPPNEKPHRKIERDDV). A disordered region spans residues 1–48 (MPTMIKKDDKAMEPPNEKPHRKIERDDVPESSNHIPPPESGVLKGGKV). The chain crosses the membrane as a helical span at residues 97 to 119 (YLFYKFLLVLLYICFGLFRYGQY).

Belongs to the UPP synthase family. As to quaternary structure, forms an active dehydrodolichyl diphosphate synthase complex with either SRT1 or RER2. The cofactor is Mg(2+).

The protein resides in the endoplasmic reticulum membrane. Its subcellular location is the lipid droplet. It is found in the nucleus membrane. It catalyses the reaction n isopentenyl diphosphate + (2E,6E)-farnesyl diphosphate = a di-trans,poly-cis-polyprenyl diphosphate + n diphosphate. Its pathway is protein modification; protein glycosylation. Functionally, with SRT1 or RER2, forms the dehydrodolichyl diphosphate synthase (DDS) complex, an essential component of the dolichol monophosphate (Dol-P) biosynthetic machinery. Adds multiple copies of isopentenyl pyrophosphate (IPP) to farnesyl pyrophosphate (FPP) to produce dehydrodolichyl diphosphate (Dedol-PP), a precursor of dolichol which is utilized as a sugar carrier in protein glycosylation in the endoplasmic reticulum (ER). The sequence is that of Dehydrodolichyl diphosphate synthase complex subunit NUS1 (NUS1) from Saccharomyces cerevisiae (strain ATCC 204508 / S288c) (Baker's yeast).